The chain runs to 1395 residues: MREADEQYFETLETQLEAAFDVAERAKERGGDPKPEVEIPTARDMADRVENILGIDGVAERVRELEGQMSREEAALELVEDFVEGTVGDYDSREGKVEGAVRTAVALLTEGVVAAPIEGIDRVELLENDDGTEFINVYYAGPIRSAGGTAQALSVLVADYARALLGIDQYKAREEEIGRYAEEIDLYDKDTGLQYSPKEKETKFIAEHMPIMLDGEATGDEEVSGYRDLERVDSNSPRGGMCLVLAEGIALKAPKIQRYTRNLDEVDWPWLQDLIDGTIGKDEADEGDSAEDANGDDAGEGADDDGGDEADEQAGPPRVEPADKYLRDLIAGRPVFSHPSKSGGFRLRYGRSRNHGFATAGVHPATMHLVDDFLATGTQIKTERPGKAAGVVPVDTIEGPTVRLANGDVRRIDDAEEALAVRNGVEKILDLGEYLVNYGEFVENNHPLAPASYTVEWWEQDLAAAGADVQAMQDSPHIDLADPSAEEAIEWATEYDAPLHPKYTYLWHDVSIEQVCALADAVEDAQVAQADGAYADPEMDGTAGDAHSDDGALVLPRSDAVQQTLEHLLIGHTQDEETITVTDWVPLVRTLGFSRSLERDWTREDLSEHARTYGESESLDAIGVAEDAEREDGQNAIKAINEVAPFQVRERAPTRIGNRMGRPEKSERRDLSPAVHTLSPIGEAGGAQRDVAKATKHADDMSDTPGQVEVEVARRRCPDCGTETHQANCAECSGTTEPVYVCPDCEAEVERDESGRAECGRCETLASPTQYKVLDLQEAYRDALQNVGERETAFEQLKAVKGLTSEEKVPEPMEKGILRAKHDVSAFKDGTVRYDMTDLPVTAVRASELDVSAERLRGLGYTEDIHGDPLTHEDQLVELKVQDIVLSDGAAEHMLQTARFVDDLLEQYYGLERFYEFDDREDLVGELVFGMAPHTSAATVGRVVGFTSAAVGYAHPYFHAAKRRNCFHPDTRLWYEDENDDWEYGTIEELVESRLDDPQEDDFGTLVQELDGDLTVSSLGENGPCRQPVDAVSKHPAPDHLVEVAVGDRTLRVTPDHTMLRAGPDGIEEVPASDLAAGDDLPAYDGGETTTMTARGEASTAATDGAAPTDTVEAVEYVESDVDHVYCLTVADTHRVAVEGTYVGQCDGDEDCVMLLMDGLLNFSKSYLPNQRGGQMDAPLVMSSRIDPSEIDDEAHNMDIMDAYPREFYEATREMKDPTEVEDVMKIAEETLGTDREYTEFRHTHDTANIAAGPDLSAYKTLGSMEDKMDAQLEISRKLRAVVESDVAERIIEYHFLPDLIGNLRAFSRQEVRCLDCGESFRRAPLTGDCRECGGRVNLTVHEGSVNKYIDTAIRVADEFGARDYTKQRLKILERKIESVFENDHNKQSGIADFM.

2 disordered regions span residues 279-320 and 657-704; these read IGKD…PRVE and GNRM…MSDT. A compositionally biased stretch (acidic residues) spans 283 to 312; it reads EADEGDSAEDANGDDAGEGADDDGGDEADE. Basic and acidic residues-rich tracts occupy residues 661-671 and 690-700; these read GRPEKSERRDL and DVAKATKHADD.

The protein belongs to the archaeal DNA polymerase II family. As to quaternary structure, heterodimer of a large subunit and a small subunit. This protein undergoes a protein self splicing that involves a post-translational excision of the intervening region (intein) followed by peptide ligation.

It carries out the reaction DNA(n) + a 2'-deoxyribonucleoside 5'-triphosphate = DNA(n+1) + diphosphate. The enzyme catalyses Exonucleolytic cleavage in the 3'- to 5'-direction to yield nucleoside 5'-phosphates.. In terms of biological role, possesses two activities: a DNA synthesis (polymerase) and an exonucleolytic activity that degrades single-stranded DNA in the 3'- to 5'-direction. Has a template-primer preference which is characteristic of a replicative DNA polymerase. The polypeptide is DNA polymerase II large subunit (Haloarcula marismortui (strain ATCC 43049 / DSM 3752 / JCM 8966 / VKM B-1809) (Halobacterium marismortui)).